The following is a 1031-amino-acid chain: Pre-mRNA-splicing factor SYF1 (1031 aa).

HAT repeat units lie at residues 28 to 60, 90 to 122, 214 to 248, and 250 to 269; these read HLIP…NVKE, DGLQ…TRQS, KNGS…WAEI, and GGDA…PSLT. The interval 346–368 is disordered; sequence VEEKVDGEQPQVEGQEQQPQEEP. Residues 353-368 are compositionally biased toward low complexity; that stretch reads EQPQVEGQEQQPQEEP. HAT repeat units follow at residues 452–487, 610–646, 664–698, 700–732, 734–768, 773–807, 845–879, and 881–915; these read GEFE…FSET, PDLE…MELR, PKNT…LEES, GTVE…FLEE, KYFE…KFVK, KKLE…LEEE, FGLP…MERK, and GEID…FEIE. 2 disordered regions span residues 948 to 969 and 1003 to 1031; these read AAAS…QDAA and TNAN…EDEF.

Belongs to the crooked-neck family. Associated with the spliceosome.

Its subcellular location is the nucleus. Involved in pre-mRNA splicing and cell cycle progression. This is Pre-mRNA-splicing factor SYF1 (SYF1) from Cryptococcus neoformans var. neoformans serotype D (strain B-3501A) (Filobasidiella neoformans).